A 422-amino-acid chain; its full sequence is Serine protease inhibitor A3A (422 aa).

The first 17 residues, 1–17, serve as a signal peptide directing secretion; that stretch reads MAFIAALGLLMVGICPA. Residues Asn218, Asn230, and Asn271 are each glycosylated (N-linked (GlcNAc...) asparagine). The tract at residues 369 to 394 is RCL; the sequence is HTEADVITIARYNFQSAKIKAKIVKV.

The protein belongs to the serpin family.

It localises to the secreted. The chain is Serine protease inhibitor A3A (Serpina3a) from Mus musculus (Mouse).